The following is a 61-amino-acid chain: UPF0434 protein Bpet2671 (61 aa).

The protein belongs to the UPF0434 family.

In Bordetella petrii (strain ATCC BAA-461 / DSM 12804 / CCUG 43448), this protein is UPF0434 protein Bpet2671.